The following is a 378-amino-acid chain: MKWSVIQALALASGVQAHGYLTFPMSRTGLNAQAGPDTCPECTILEPVTAWPDLDSAQVGRSGPCGYNARVSVDYNQPGPRWGSAPVVTYKGGDVADVQWCVDNNGDHGGMFTYRICQDQALVDKLLTPGYLPSEAEKQAAENCFRAGTLPCTDVNGQSCGYSPDCSPGQACWRNDWFTCKGFQDTKCRGVDNAPLNSCYTSIAGGYTVSSRIKIPNYVSNHTLLSFKWNSFQTPQIYLTCADIKITAPDSQSPPTTTTTSTPASPPPTSCATPAASVAVTFRSKTTTSVGQTVKIAGSIAQLGGWDASKAPALSASQYTSSNPLWTTTISLPAGATFEYKFIRVESSGAVTYESGANRVYTVPRDCAGTATVDTAWK.

The N-terminal stretch at 1-17 (MKWSVIQALALASGVQA) is a signal peptide. His18 contacts Cu(2+). Position 18 is a methylhistidine (His18). The region spanning 18-244 (HGYLTFPMSR…PQIYLTCADI (227 aa)) is the Chitin-binding type-4 domain. Intrachain disulfides connect Cys39–Cys42, Cys65–Cys241, Cys101–Cys199, Cys117–Cys144, Cys152–Cys160, Cys166–Cys172, and Cys180–Cys188. His108 contacts Cu(2+). Asn221 is a glycosylation site (N-linked (GlcNAc...) asparagine). Tyr238 provides a ligand contact to Cu(2+). A compositionally biased stretch (low complexity) spans 250–263 (DSQSPPTTTTTSTP). Residues 250 to 272 (DSQSPPTTTTTSTPASPPPTSCA) form a disordered region. One can recognise a CBM20 domain in the interval 272–378 (ATPAASVAVT…GTATVDTAWK (107 aa)).

Belongs to the polysaccharide monooxygenase AA13 family. The cofactor is Cu(2+). In terms of processing, O-mannosylated.

It is found in the secreted. The enzyme catalyses starch + reduced acceptor + O2 = D-glucono-1,5-lactone-terminated malto-oligosaccharides + short-chain malto-oligosaccharides + acceptor + H2O.. Its activity is regulated as follows. Activity is inhibited by both beta-cyclodextrin or amylose that block the access to the active site. In terms of biological role, starch-active lytic polysaccharide monooxygenase that oxidizes the C1 position of starch substrates. Catalysis by LPMOs requires the reduction of the active-site copper from Cu(II) to Cu(I) by a reducing agent and H(2)O(2) or O(2) as a cosubstrate. The sequence is that of AA13 family lytic polysaccharide monooxygenase A from Pyricularia oryzae (strain 70-15 / ATCC MYA-4617 / FGSC 8958) (Rice blast fungus).